Reading from the N-terminus, the 218-residue chain is Ribonuclease HII (218 aa).

In terms of domain architecture, RNase H type-2 spans 22–211; it reads VRIAGVDEAG…VRAALESRFS (190 aa). Positions 28, 29, and 119 each coordinate a divalent metal cation.

This sequence belongs to the RNase HII family. The cofactor is Mn(2+). Requires Mg(2+) as cofactor.

It is found in the cytoplasm. The enzyme catalyses Endonucleolytic cleavage to 5'-phosphomonoester.. Endonuclease that specifically degrades the RNA of RNA-DNA hybrids. This chain is Ribonuclease HII, found in Maricaulis maris (strain MCS10) (Caulobacter maris).